A 124-amino-acid chain; its full sequence is Large ribosomal subunit protein bL12 (124 aa).

It belongs to the bacterial ribosomal protein bL12 family. Homodimer. Part of the ribosomal stalk of the 50S ribosomal subunit. Forms a multimeric L10(L12)X complex, where L10 forms an elongated spine to which 2 to 4 L12 dimers bind in a sequential fashion. Binds GTP-bound translation factors.

In terms of biological role, forms part of the ribosomal stalk which helps the ribosome interact with GTP-bound translation factors. Is thus essential for accurate translation. This Brucella anthropi (strain ATCC 49188 / DSM 6882 / CCUG 24695 / JCM 21032 / LMG 3331 / NBRC 15819 / NCTC 12168 / Alc 37) (Ochrobactrum anthropi) protein is Large ribosomal subunit protein bL12.